The sequence spans 143 residues: MFLGEYQHSLDEKGRITIPAKFREEIGYKFVATKGLDNCIFLYPQDEWQLIEKKLRSLPFTRADVRSFVRFFFSGAAELDLDRQGRSVLPLNLREYAGIDRDVIIIGVGTRVEIWSTEKWTDYNENAQSSYEEIAENLVDLGI.

2 SpoVT-AbrB domains span residues 5 to 47 and 76 to 119; these read EYQH…PQDE and AAEL…STEK.

This sequence belongs to the MraZ family. As to quaternary structure, forms oligomers.

Its subcellular location is the cytoplasm. It is found in the nucleoid. This chain is Transcriptional regulator MraZ, found in Syntrophomonas wolfei subsp. wolfei (strain DSM 2245B / Goettingen).